The chain runs to 68 residues: Large ribosomal subunit protein eL24 (68 aa).

Positions 7, 10, 33, and 37 each coordinate Zn(2+). The segment at C7–C37 adopts a C4-type zinc-finger fold.

The protein belongs to the eukaryotic ribosomal protein eL24 family. In terms of assembly, part of the 50S ribosomal subunit. Forms a cluster with proteins L3 and L14. Zn(2+) serves as cofactor.

In terms of biological role, binds to the 23S rRNA. The chain is Large ribosomal subunit protein eL24 from Methanopyrus kandleri (strain AV19 / DSM 6324 / JCM 9639 / NBRC 100938).